The following is a 614-amino-acid chain: Glucosidase 2 subunit beta (614 aa).

The N-terminal stretch at 1–20 (MGLHTLLLLLLLRISASAAA) is a signal peptide. A glycan (N-linked (GlcNAc...) asparagine) is linked at asparagine 115. 3 stretches are compositionally biased toward basic and acidic residues: residues 194–222 (EEER…KKAS), 231–272 (QENH…HDPE), and 324–351 (TGEK…HSEE). A disordered region spans residues 194–396 (EEERLRKEKE…SHESDDEYVD (203 aa)). Positions 352–364 (THEDESDVPESAE) are enriched in acidic residues. The span at 372–382 (SEVEDDRHKYD) shows a compositional bias: basic and acidic residues. The span at 383-396 (DEDFSHESDDEYVD) shows a compositional bias: acidic residues. One can recognise an MRH domain in the interval 497–592 (DQCFESKEGK…VLSTPALCDE (96 aa)). Intrachain disulfides connect cysteine 499–cysteine 512, cysteine 549–cysteine 578, and cysteine 563–cysteine 590.

As to quaternary structure, heterodimer of a catalytic alpha subunit and a beta subunit.

It localises to the endoplasmic reticulum. It functions in the pathway glycan metabolism; N-glycan metabolism. Its function is as follows. Regulatory subunit of glucosidase II. May be required for defense response elicited by pathogen-associated molecular patterns (PAMPs). The polypeptide is Glucosidase 2 subunit beta (Oryza sativa subsp. indica (Rice)).